A 407-amino-acid chain; its full sequence is Aurofusarin biosynthesis cluster protein S (407 aa).

Residues 1–35 form the signal peptide; sequence MSKQKPSLWRALRALSFIISIPLLIQYLVLKWYST. N-linked (GlcNAc...) asparagine glycans are attached at residues asparagine 52, asparagine 174, asparagine 196, asparagine 274, and asparagine 312. FAS1 domains are found at residues 52 to 192 and 195 to 365; these read NLTV…DTVL and PNST…DSIL.

As to quaternary structure, might be part of an extracellular enzyme complex composed of GIP1, aurF, aurO and aurS.

It is found in the secreted. The protein localises to the extracellular space. Its pathway is pigment biosynthesis. Part of the gene cluster that mediates the biosynthesis of aurofusarin, a red mycelium pigment which is acting as a mycotoxin. The first step is performed by the polyketide synthase which condenses one acetyl-CoA and 6 malonyl-CoA units to form the first intermediate, the cyclic heptaketide and yellow pigment YWA1. The C2 hydroxyl group in the pyrone ring of YWA1 is probably formed during ring closure by an aldol-type cyclization reaction. The dehydratase aurZ then acts as the first tailoring enzyme in the aurofusarin biosynthetic pathway by converting YWA1 to nor-rubrofusarin. Nor-rubrofusarin is then methylated to rubrofusarin by the O-methyltransferase aurJ. Rubrofusarin is then transported across the plasma membrane by the rubrofusarin-specific pump aurT for further enzymatic processing by the extracellular complex composed of GIP1, aurF, aurO and aurS to yield aurofusarin. The sequence is that of Aurofusarin biosynthesis cluster protein S from Gibberella zeae (strain ATCC MYA-4620 / CBS 123657 / FGSC 9075 / NRRL 31084 / PH-1) (Wheat head blight fungus).